The chain runs to 525 residues: MELTLWTYEGPPHIGAMRIATSMKKLHYVLHAPQGDTYADLLFTMIERRGSRPPVTYTTFQARDLGGDTAELVKGHIKEAVDRFKPETLLVGESCTAELIQDQPGSLAKGMGFDIPIVSLELPAYSKKENWGGSETFYQIVRTLLKDHSNESKHTWQEEKRRPRVNLLGPTLLGFRCRDDVLEIQKLLGQYGIDVNVVAPLGASPADILRIPNADVNVCLYPEIAESTCIWLERNLNIPFTTTVPLGVGATQDFLKELHKVLEMEIPQSVNESNNSKLTWYSNSVDSNYLTGKRVFIFGDGTHALAAARIANEELGFKVVGLGTYSREMARKVRPAAKALGLEALITNDYLEVEDAIKETSPELVLGTQMERHSAKRLGIPCAVISTPMHVQDVPARYSPQMGWEGANVIFDDWVHPLMMGLEEHLIGMFKHDFEFVDGHQSHLGHLGGKGTQNTNKEAIKTNLQDSVITDSDPIWTHEGEKELSKIPFFVRGKVRRNTENYARQAGCREINEETLYDAKAHYKA.

Residue Asp36 participates in [4Fe-4S] cluster binding. Asp286 acts as the Proton donor in catalysis. Residue 421–422 (GL) coordinates substrate.

Belongs to the ChlB/BchB/BchZ family. As to quaternary structure, protochlorophyllide reductase is composed of three subunits; ChlL, ChlN and ChlB. Forms a heterotetramer of two ChlB and two ChlN subunits. The cofactor is [4Fe-4S] cluster.

The enzyme catalyses chlorophyllide a + oxidized 2[4Fe-4S]-[ferredoxin] + 2 ADP + 2 phosphate = protochlorophyllide a + reduced 2[4Fe-4S]-[ferredoxin] + 2 ATP + 2 H2O. Its pathway is porphyrin-containing compound metabolism; chlorophyll biosynthesis (light-independent). Its function is as follows. Component of the dark-operative protochlorophyllide reductase (DPOR) that uses Mg-ATP and reduced ferredoxin to reduce ring D of protochlorophyllide (Pchlide) to form chlorophyllide a (Chlide). This reaction is light-independent. The NB-protein (ChlN-ChlB) is the catalytic component of the complex. This is Light-independent protochlorophyllide reductase subunit B from Prochlorococcus marinus (strain NATL2A).